The sequence spans 317 residues: tRNA dimethylallyltransferase (317 aa).

An ATP-binding site is contributed by 19-26; that stretch reads GPTASGKS. Residue 21-26 coordinates substrate; sequence TASGKS. The segment at 49–52 is interaction with substrate tRNA; it reads DSAQ.

It belongs to the IPP transferase family. Monomer. Requires Mg(2+) as cofactor.

The catalysed reaction is adenosine(37) in tRNA + dimethylallyl diphosphate = N(6)-dimethylallyladenosine(37) in tRNA + diphosphate. In terms of biological role, catalyzes the transfer of a dimethylallyl group onto the adenine at position 37 in tRNAs that read codons beginning with uridine, leading to the formation of N6-(dimethylallyl)adenosine (i(6)A). This chain is tRNA dimethylallyltransferase, found in Erythrobacter litoralis (strain HTCC2594).